The following is a 355-amino-acid chain: MTGERGLTYAEAGVDIDAGNAMVEAIKPLVRSTRRPGADAEIGGFGGLFDLKAAGFKDPILVAANDGVGTKVKIAIETGRHDTIGIDLVAMCVNDIVVQGAEPLFFLDYYATGKLVPGVGADIVRGIAEGCRQAGCALIGGETAEMPGLYDGSDYDLAGFSVGAAERGALLPRPGIAPGDLVLGLPSSGVHSNGFSLVRRIVAASGLGWDAPAPFAPGRSLGEALLTPTRIYVRPLLAALKATGAGAIKALAHITGGGFPDNLPRVLPEGVGIALDLDEIAVPPVFGWLARTGKVAEAEMLRTFNCGIGMVVVVAADRIASVEAALREAGEAPVRLGRITPRGEAPVTFSGSLAL.

This sequence belongs to the AIR synthase family.

It localises to the cytoplasm. It carries out the reaction 2-formamido-N(1)-(5-O-phospho-beta-D-ribosyl)acetamidine + ATP = 5-amino-1-(5-phospho-beta-D-ribosyl)imidazole + ADP + phosphate + H(+). It participates in purine metabolism; IMP biosynthesis via de novo pathway; 5-amino-1-(5-phospho-D-ribosyl)imidazole from N(2)-formyl-N(1)-(5-phospho-D-ribosyl)glycinamide: step 2/2. The sequence is that of Phosphoribosylformylglycinamidine cyclo-ligase from Methylobacterium nodulans (strain LMG 21967 / CNCM I-2342 / ORS 2060).